Here is a 699-residue protein sequence, read N- to C-terminus: eEF1A lysine and N-terminal methyltransferase (699 aa).

N-acetylmethionine is present on Met1. Phosphoserine is present on Ser267. Residues 433–459 (VSHKAQKKRKKDRKKQRPADAEDLPAA) are disordered. Residues 436–448 (KAQKKRKKDRKKQ) show a composition bias toward basic residues.

Belongs to the methyltransferase superfamily. As to quaternary structure, forms a tripartite complex containing GAB1, METTL13 and SPRY2. Within the complex interacts with GAB1 and SPRY2.

It is found in the cytoplasm. The protein resides in the nucleus. The protein localises to the mitochondrion. The catalysed reaction is L-lysyl-[protein] + S-adenosyl-L-methionine = N(6)-methyl-L-lysyl-[protein] + S-adenosyl-L-homocysteine + H(+). It catalyses the reaction N(6)-methyl-L-lysyl-[protein] + S-adenosyl-L-methionine = N(6),N(6)-dimethyl-L-lysyl-[protein] + S-adenosyl-L-homocysteine + H(+). The enzyme catalyses N-terminal glycyl-L-lysyl-L-glutamyl-[protein] + 3 S-adenosyl-L-methionine = N-terminal N,N,N-trimethyl-glycyl-L-lysyl-L-glutamyl-[protein] + 3 S-adenosyl-L-homocysteine + 3 H(+). Protein N-terminal methyltransferase activity is inhibited by GTP and GDP. Its function is as follows. Dual methyltransferase that catalyzes methylation of elongation factor 1-alpha (EEF1A1 and EEF1A2) at two different positions, and is therefore involved in the regulation of mRNA translation. Via its C-terminus, methylates EEF1A1 and EEF1A2 at the N-terminal residue 'Gly-2'. Via its N-terminus dimethylates EEF1A1 and EEF1A2 at residue 'Lys-55'. Has no activity towards core histones H2A, H2B, H3 and H4. This is eEF1A lysine and N-terminal methyltransferase from Homo sapiens (Human).